Consider the following 215-residue polypeptide: MRDELVWIDCEMTGLDLGSDKLIEIAALVTDAELNVLGDGVDVVIHADDAALAAMGEVVTEMHSRSGLIDEVKASTVDLATAEEMVLDYIRTHVKAPKTAPLAGNSIATDRAFIVRDMPALDAYLHYRMIDVSSIKELCRRWYPRIYFGQPVKGLTHRALADIHESIRELQFYRRTAFVAPPGPSTSEIEAVAAALDEGKDAPGPSDSASAPPTG.

One can recognise an Exonuclease domain in the interval 5 to 170; it reads LVWIDCEMTG…ADIHESIREL (166 aa). Tyrosine 127 is an active-site residue. The interval 196–215 is disordered; that stretch reads LDEGKDAPGPSDSASAPPTG. The segment covering 202–215 has biased composition (low complexity); it reads APGPSDSASAPPTG.

It belongs to the oligoribonuclease family.

It localises to the cytoplasm. In terms of biological role, 3'-to-5' exoribonuclease specific for small oligoribonucleotides. The polypeptide is Oligoribonuclease (Mycolicibacterium paratuberculosis (strain ATCC BAA-968 / K-10) (Mycobacterium paratuberculosis)).